A 394-amino-acid chain; its full sequence is MRMPTNLQHPNMTAIASLPRSQNALKIVSPNTFHVDANAPLPTLVDHDSVLIRVVCVAINPVDGKSADLSATAGATSGTDFAGIVVALPPDTNSEPDDDALKIGDRVMGFVFGNNPQGRDNGAFAEYVTVPRRLLWRLPAHMSLETAASLPASLASVGMAMHYLQIPLSSLQSAISKSIASSSAAAAADDEGPFVLVYGGGTSTGCMAIQILRLAGFVPVTCCSSSSAARALSLGAAATFDYASATCGRDVREHTHDSLALAIDCISDSASMSICYEAIGGGGGRYVALDPFPVRGCVRRSVVPDWICTLTQFGRPVAWAPPYNIDERPGDRRFAEEWYRLAQRMLDAHVIRAPTLETRTGGLASVPEGISEVRMGEVKRKKLVYNIVEQKAAA.

62-65 (VDGK) is a binding site for NADP(+). 152–159 (ASLASVGM) lines the substrate pocket. Residues 224-227 (SSSS), tyrosine 242, and 289-290 (LD) each bind NADP(+). 309 to 313 (TLTQF) contacts substrate. NADP(+) is bound at residue 378-379 (VK).

This sequence belongs to the zinc-containing alcohol dehydrogenase family. In terms of assembly, monomer.

It functions in the pathway secondary metabolite biosynthesis. Its function is as follows. Trans-enoyl reductase; part of the gene cluster that mediates the biosynthesis of fumosorinone, a 2-pyridone alkaloid that acts as an inhibitor of protein tyrosine phosphatase 1B which is implicated asa negative regulator of insulin receptor signaling and a potential drug target for the treatment of type II diabetes and other associated metabolic syndromes. The polyketide-amino acid backbone of fumosorinone is first assembled by the PKS-NRPS hybrid fumoS. The PKS modules condense one acetyl-CoA starter unit with 7 malonyl-CoA units, programmed C-methylations occurring after the first 3 and the sixth extensions, and cycles of full reduction occurring after the first 2 extensions. Because fumoS lacks a designated enoyl reductase (ER) domain, the required activity is provided the enoyl reductase fumoC. Upon formation of the polyketide backbone on the thiotemplate, the polyketide is transferred to the NRPS module and linked to tyrosine to produce the acyltetramic acid intermediate called prefumosorinone A. The cytochrome P450 monooxygenase fumoA then probably catalyzes an unprecedented oxidative ring expansion of prefumosorinone A to form prefumosorinone B which contains the 2-pyridone core of fumosorinone. The cytochrome P450 monooxygenase fumoB might hydroxylate the nitrogen of prefumosorinone B, but not the acyltetramic acid prefumosorinone A, to form fumosorinone. The chain is Trans-enoyl reductase fumoC from Cordyceps fumosorosea (strain ARSEF 2679) (Isaria fumosorosea).